Consider the following 612-residue polypeptide: Heparan-sulfate 6-O-sulfotransferase 2 (612 aa).

Topologically, residues 1-4 (MALP) are cytoplasmic. Residues 5–27 (AFAARALGPPLQPEQGAPARTTC) traverse the membrane as a helical; Signal-anchor for type II membrane protein segment. Positions 9-52 (RALGPPLQPEQGAPARTTCPRRHSRVEAELAASRPGSVAASVRA) are disordered. At 28–612 (PRRHSRVEAE…DYIGSVETWR (585 aa)) the chain is on the lumenal side. The N-linked (GlcNAc...) asparagine glycan is linked to Asn-209. 3'-phosphoadenylyl sulfate is bound at residue 233-241 (HIQKTGGTT). Substrate is bound by residues 263-264 (KK), Arg-280, Trp-285, and His-290. His-290 (proton acceptor) is an active-site residue. 3'-phosphoadenylyl sulfate-binding residues include Arg-325 and Ser-333. His-337 and Trp-344 together coordinate substrate. An N-linked (GlcNAc...) asparagine glycan is attached at Asn-404. A 3'-phosphoadenylyl sulfate-binding site is contributed by 457–459 (TQY). N-linked (GlcNAc...) asparagine glycosylation is present at Asn-460. Residue 463–464 (RA) coordinates 3'-phosphoadenylyl sulfate. The tract at residues 529 to 612 (HFQSQSQGQS…DYIGSVETWR (84 aa)) is disordered. Low complexity predominate over residues 531–564 (QSQSQGQSQSQSPGQNLSQNPNPNPNQNLTQNLS). 5 N-linked (GlcNAc...) asparagine glycosylation sites follow: Asn-546, Asn-558, Asn-562, Asn-574, and Asn-599. Positions 565-577 (HNLTPSSNPNSTQ) are enriched in polar residues.

Belongs to the sulfotransferase 6 family.

The protein localises to the membrane. It catalyses the reaction alpha-D-glucosaminyl-[heparan sulfate](n) + 3'-phosphoadenylyl sulfate = 6-sulfo-alpha-D-glucosaminyl-[heparan sulfate](n) + adenosine 3',5'-bisphosphate + H(+). 6-O-sulfation enzyme which catalyzes the transfer of sulfate from 3'-phosphoadenosine 5'-phosphosulfate (PAPS) to position 6 of the N-sulfoglucosamine residue (GlcNS) of heparan sulfate. The chain is Heparan-sulfate 6-O-sulfotransferase 2 (Hs6st2) from Mus musculus (Mouse).